A 154-amino-acid polypeptide reads, in one-letter code: Ribosomal RNA large subunit methyltransferase H (154 aa).

Residues L76, G103, and 122–127 (LSPLTL) each bind S-adenosyl-L-methionine.

This sequence belongs to the RNA methyltransferase RlmH family. Homodimer.

It localises to the cytoplasm. It catalyses the reaction pseudouridine(1915) in 23S rRNA + S-adenosyl-L-methionine = N(3)-methylpseudouridine(1915) in 23S rRNA + S-adenosyl-L-homocysteine + H(+). Its function is as follows. Specifically methylates the pseudouridine at position 1915 (m3Psi1915) in 23S rRNA. The chain is Ribosomal RNA large subunit methyltransferase H from Wolinella succinogenes (strain ATCC 29543 / DSM 1740 / CCUG 13145 / JCM 31913 / LMG 7466 / NCTC 11488 / FDC 602W) (Vibrio succinogenes).